Here is a 424-residue protein sequence, read N- to C-terminus: Tol-Pal system protein TolB (424 aa).

The N-terminal stretch at 1–20 (MKQFIVFILSLYTTLSWAVL) is a signal peptide.

It belongs to the TolB family. In terms of assembly, the Tol-Pal system is composed of five core proteins: the inner membrane proteins TolA, TolQ and TolR, the periplasmic protein TolB and the outer membrane protein Pal. They form a network linking the inner and outer membranes and the peptidoglycan layer.

The protein localises to the periplasm. In terms of biological role, part of the Tol-Pal system, which plays a role in outer membrane invagination during cell division and is important for maintaining outer membrane integrity. The chain is Tol-Pal system protein TolB from Vesicomyosocius okutanii subsp. Calyptogena okutanii (strain HA).